The following is a 172-amino-acid chain: Transcriptional repressor NrdR (172 aa).

A zinc finger lies at 3–34 (CPFCSYSDNRVLESRLAEEGESVRRRRECKQC). Residues 49-139 (TVVIKRNGRR…VYRKFKGVAD (91 aa)) form the ATP-cone domain.

The protein belongs to the NrdR family. Zn(2+) is required as a cofactor.

Functionally, negatively regulates transcription of bacterial ribonucleotide reductase nrd genes and operons by binding to NrdR-boxes. The chain is Transcriptional repressor NrdR from Gloeobacter violaceus (strain ATCC 29082 / PCC 7421).